A 430-amino-acid polypeptide reads, in one-letter code: Adenylosuccinate synthetase (430 aa).

Residues 12–18 and 40–42 contribute to the GTP site; these read GDEGKGK and GHT. Aspartate 13 acts as the Proton acceptor in catalysis. Mg(2+)-binding residues include aspartate 13 and glycine 40. Residues 13 to 16, 38 to 41, threonine 130, arginine 144, glutamine 225, threonine 240, and arginine 304 contribute to the IMP site; these read DEGK and NAGH. The active-site Proton donor is histidine 41. A substrate-binding site is contributed by 300–306; that stretch reads STTGRPR. Residues arginine 306, 332-334, and 414-416 each bind GTP; these read KLD and SVG.

The protein belongs to the adenylosuccinate synthetase family. In terms of assembly, homodimer. Mg(2+) is required as a cofactor.

It localises to the cytoplasm. It carries out the reaction IMP + L-aspartate + GTP = N(6)-(1,2-dicarboxyethyl)-AMP + GDP + phosphate + 2 H(+). It participates in purine metabolism; AMP biosynthesis via de novo pathway; AMP from IMP: step 1/2. Plays an important role in the de novo pathway of purine nucleotide biosynthesis. Catalyzes the first committed step in the biosynthesis of AMP from IMP. The chain is Adenylosuccinate synthetase from Pelobacter propionicus (strain DSM 2379 / NBRC 103807 / OttBd1).